We begin with the raw amino-acid sequence, 274 residues long: 2,3,4,5-tetrahydropyridine-2,6-dicarboxylate N-succinyltransferase (274 aa).

Substrate contacts are provided by R106 and D143.

This sequence belongs to the transferase hexapeptide repeat family. As to quaternary structure, homotrimer.

The protein resides in the cytoplasm. The catalysed reaction is (S)-2,3,4,5-tetrahydrodipicolinate + succinyl-CoA + H2O = (S)-2-succinylamino-6-oxoheptanedioate + CoA. It functions in the pathway amino-acid biosynthesis; L-lysine biosynthesis via DAP pathway; LL-2,6-diaminopimelate from (S)-tetrahydrodipicolinate (succinylase route): step 1/3. This Herminiimonas arsenicoxydans protein is 2,3,4,5-tetrahydropyridine-2,6-dicarboxylate N-succinyltransferase.